Here is a 295-residue protein sequence, read N- to C-terminus: MLILPIVKGEYKKDYSLKHLTWFKVGGNAEIFFKPFDSEDLASFLIQNKQKLPITTFGAGSNIIIRDGGIEGVTIKLGQNFSNIEFIDEHLIVGSSCLNYNLAKFCQANAITGFEFLVGIPGTIGGGVVMNAGAYDSEFKDIIVKIEAIDFAGNFLTFTNEEIGFKYRSNNLPKDLIILKAVFKVNKGDSENILLRMNEINNARSATQPIKERTGGSTFANPEGLKSWELIDKAGLRGYRIGGASMSELHCNFMINNGDATAKDLEDLGDFVRQKVFEDSGVELKWEIKRLGRYV.

In terms of domain architecture, FAD-binding PCMH-type spans 24 to 188 (KVGGNAEIFF…LKAVFKVNKG (165 aa)). Residue arginine 168 is part of the active site. The active-site Proton donor is serine 217. Glutamate 287 is an active-site residue.

This sequence belongs to the MurB family. It depends on FAD as a cofactor.

The protein localises to the cytoplasm. The catalysed reaction is UDP-N-acetyl-alpha-D-muramate + NADP(+) = UDP-N-acetyl-3-O-(1-carboxyvinyl)-alpha-D-glucosamine + NADPH + H(+). Its pathway is cell wall biogenesis; peptidoglycan biosynthesis. Cell wall formation. The chain is UDP-N-acetylenolpyruvoylglucosamine reductase from Rickettsia felis (strain ATCC VR-1525 / URRWXCal2) (Rickettsia azadi).